We begin with the raw amino-acid sequence, 281 residues long: Large ribosomal subunit protein uL2 (281 aa).

Positions 220–281 are disordered; sequence VRGSVMNPND…RRRDGKALSK (62 aa). Basic residues predominate over residues 258–271; it reads KTRKKNKQSNKMIM. The segment covering 272–281 has biased composition (basic and acidic residues); that stretch reads RRRDGKALSK.

The protein belongs to the universal ribosomal protein uL2 family. As to quaternary structure, part of the 50S ribosomal subunit. Forms a bridge to the 30S subunit in the 70S ribosome.

Its function is as follows. One of the primary rRNA binding proteins. Required for association of the 30S and 50S subunits to form the 70S ribosome, for tRNA binding and peptide bond formation. It has been suggested to have peptidyltransferase activity; this is somewhat controversial. Makes several contacts with the 16S rRNA in the 70S ribosome. In Lachnoclostridium phytofermentans (strain ATCC 700394 / DSM 18823 / ISDg) (Clostridium phytofermentans), this protein is Large ribosomal subunit protein uL2.